The following is a 92-amino-acid chain: Serine rich endogenous peptide 11 (92 aa).

The first 29 residues, 1–29 (MENNTFSSKSINLLILLLLLCTFLCQTES), serve as a signal peptide directing secretion. The interval 50–92 (PNTDIGTPSSTSDRGGGGNGRRLMSQMDVGASSSGQGGGRNRH) is disordered. Polar residues predominate over residues 53–62 (DIGTPSSTSD). 2 consecutive short sequence motifs (SCOOP motif) follow at residues 53–67 (DIGTPSSTSDRGGGG) and 75–89 (QMDVGASSSGQGGGR). 2 short sequence motifs (sxS motif essential for MIK2 binding) span residues 59 to 61 (STS) and 81 to 83 (SSS).

This sequence belongs to the serine rich endogenous peptide (SCOOP) phytocytokine family. As to quaternary structure, interacts with MIK2 (via extracellular leucine-rich repeat domain); this interaction triggers the formation of complex between MIK2 and the BAK1/SERK3 and SERK4 coreceptors, and subsequent BAK1 activation by phosphorylation. In terms of tissue distribution, mostly expressed in seedlings shoots and roots, and, to a lower extent, in leaves.

It is found in the cell membrane. The protein resides in the secreted. Its subcellular location is the extracellular space. The protein localises to the apoplast. In terms of biological role, brassicaceae-specific phytocytokine (plant endogenous peptide released into the apoplast) perceived by MIK2 in a BAK1/SERK3 and SERK4 coreceptors-dependent manner, that modulates various physiological and antimicrobial processes including growth prevention and reactive oxygen species (ROS) response regulation. This is Serine rich endogenous peptide 11 from Arabidopsis thaliana (Mouse-ear cress).